Here is an 834-residue protein sequence, read N- to C-terminus: Semaphorin-4C (834 aa).

Positions 1-20 are cleaved as a signal peptide; sequence MAPHWAVWLLAAGLWGLGIG. Over 21 to 664 the chain is Extracellular; sequence AEMWWNLVPR…EARAPLENLG (644 aa). The 468-residue stretch at 30–497 folds into the Sema domain; that stretch reads RKTVSSGELV…SRSQLVQLSL (468 aa). Residues 46–489 form a dominant negative effect on myogenic differentiation region; the sequence is SQTGIQDFLT…SKKVLFAGSR (444 aa). Cysteines 99 and 110 form a disulfide. N-linked (GlcNAc...) asparagine glycosylation is found at N106 and N121. 3 disulfides stabilise this stretch: C128/C137, C261/C370, and C285/C330. N-linked (GlcNAc...) asparagine glycans are attached at residues N310 and N419. The region spanning 499 to 552 is the PSI domain; sequence DCTKYRFCVDCVLARDPYCAWNVNTSRCVATTSGRSGSFLVQHVANLDTSKMCN. Disulfide bonds link C500/C517 and C509/C526. Residues N522 and N565 are each glycosylated (N-linked (GlcNAc...) asparagine). An Ig-like C2-type domain is found at 557-645; the sequence is KKVRSIPKNI…RLAAESYLVA (89 aa). An intrachain disulfide couples C578 to C628. The helical transmembrane segment at 665 to 685 threads the bilayer; it reads LVWLAVVALGAVCLVLLLLVL. Over 686–834 the chain is Cytoplasmic; sequence SLRRRLREEL…PDSNPEESSV (149 aa). Position 743 is a phosphoserine (S743). The segment at 749–834 is disordered; the sequence is GHARCQPGGG…PDSNPEESSV (86 aa). A compositionally biased stretch (pro residues) spans 757 to 773; the sequence is GGPPSPPPGIPGQPLPS. Residues 831-834 carry the PDZ-binding motif; the sequence is ESSV.

Belongs to the semaphorin family. As to quaternary structure, interacts (via the PDZ-binding motif) with GIPC (via the PDZ domain). Interacts with NCDN. Interacts (via the PDZ-binding motif) with DLG4. Interacts with PLXNB2. In terms of tissue distribution, predominantly expressed in brain (at protein level).

It is found in the postsynaptic density membrane. The protein resides in the cytoplasmic vesicle. The protein localises to the secretory vesicle. It localises to the synaptic vesicle membrane. Cell surface receptor for PLXNB2 that plays an important role in cell-cell signaling. PLXNB2 binding promotes downstream activation of RHOA and phosphorylation of ERBB2 at 'Tyr-1248'. Required for normal brain development, axon guidance and cell migration. Probable signaling receptor which may play a role in myogenic differentiation through activation of the stress-activated MAPK cascade. This chain is Semaphorin-4C (Sema4c), found in Mus musculus (Mouse).